The primary structure comprises 200 residues: Oligoribonuclease (200 aa).

One can recognise an Exonuclease domain in the interval 5–169; it reads MVWIDCEMTG…ADIRESIAEL (165 aa). The active site involves tyrosine 126.

It belongs to the oligoribonuclease family.

Its subcellular location is the cytoplasm. In terms of biological role, 3'-to-5' exoribonuclease specific for small oligoribonucleotides. In Streptomyces coelicolor (strain ATCC BAA-471 / A3(2) / M145), this protein is Oligoribonuclease.